The primary structure comprises 731 residues: 1,4-alpha-glucan branching enzyme GlgB (731 aa).

Catalysis depends on aspartate 408, which acts as the Nucleophile. Glutamate 461 (proton donor) is an active-site residue.

This sequence belongs to the glycosyl hydrolase 13 family. GlgB subfamily. As to quaternary structure, monomer.

It catalyses the reaction Transfers a segment of a (1-&gt;4)-alpha-D-glucan chain to a primary hydroxy group in a similar glucan chain.. It functions in the pathway glycan biosynthesis; glycogen biosynthesis. Its function is as follows. Catalyzes the formation of the alpha-1,6-glucosidic linkages in glycogen by scission of a 1,4-alpha-linked oligosaccharide from growing alpha-1,4-glucan chains and the subsequent attachment of the oligosaccharide to the alpha-1,6 position. The polypeptide is 1,4-alpha-glucan branching enzyme GlgB (Corynebacterium efficiens (strain DSM 44549 / YS-314 / AJ 12310 / JCM 11189 / NBRC 100395)).